The primary structure comprises 233 residues: Large ribosomal subunit protein uL1 (233 aa).

It belongs to the universal ribosomal protein uL1 family. As to quaternary structure, part of the 50S ribosomal subunit.

Functionally, binds directly to 23S rRNA. The L1 stalk is quite mobile in the ribosome, and is involved in E site tRNA release. In terms of biological role, protein L1 is also a translational repressor protein, it controls the translation of the L11 operon by binding to its mRNA. The protein is Large ribosomal subunit protein uL1 of Shewanella oneidensis (strain ATCC 700550 / JCM 31522 / CIP 106686 / LMG 19005 / NCIMB 14063 / MR-1).